A 150-amino-acid chain; its full sequence is Galectin-2 (150 aa).

One can recognise a Galectin domain in the interval 9–141; that stretch reads NQVKLQNDFK…FSSPVTVDVH (133 aa). A carbohydrate is bound by residues H51, R55, N64, E75, and R77.

Homotetramer. Oligomerization is required for carbohydrate binding.

It localises to the secreted. Its subcellular location is the extracellular space. It is found in the extracellular matrix. The protein resides in the cell wall. The protein localises to the endomembrane system. Functionally, binds lactose. May play a role in fruiting body formation. Displays toxicity towards the nematode C.elegans by binding to a specific Gal-beta-1,4-Fuc-alpha-1,6 modification of N-glycan cores on C.elegans intestinal cells. The chain is Galectin-2 (Cgl2) from Coprinopsis cinerea (Inky cap fungus).